The sequence spans 500 residues: 4-aminobutyrate aminotransferase, mitochondrial (500 aa).

The transit peptide at 1 to 28 (MASMLLAQRLACSFQHSYRLLVPGSRHI) directs the protein to the mitochondrion. Cys-163 is a [2Fe-2S] cluster binding site. 164–165 (GS) lines the pyridoxal 5'-phosphate pocket. Cys-166 is a [2Fe-2S] cluster binding site. Arg-220 lines the substrate pocket. At Lys-231 the chain carries N6-succinyllysine. Lys-252 carries the N6-acetyllysine; alternate modification. Lys-252 is subject to N6-succinyllysine; alternate. N6-acetyllysine is present on residues Lys-279 and Lys-318. An N6-(pyridoxal phosphate)lysine modification is found at Lys-357. A pyridoxal 5'-phosphate-binding site is contributed by Thr-381. An N6-acetyllysine; alternate modification is found at Lys-413. The residue at position 413 (Lys-413) is an N6-succinyllysine; alternate. 2 positions are modified to N6-acetyllysine: Lys-452 and Lys-470.

It belongs to the class-III pyridoxal-phosphate-dependent aminotransferase family. In terms of assembly, homodimer; disulfide-linked. The cofactor is pyridoxal 5'-phosphate. Requires [2Fe-2S] cluster as cofactor. In terms of tissue distribution, liver &gt; pancreas &gt; brain &gt; kidney &gt; heart &gt; placenta.

Its subcellular location is the mitochondrion matrix. The enzyme catalyses 4-aminobutanoate + 2-oxoglutarate = succinate semialdehyde + L-glutamate. It carries out the reaction (S)-3-amino-2-methylpropanoate + 2-oxoglutarate = 2-methyl-3-oxopropanoate + L-glutamate. Functionally, catalyzes the conversion of gamma-aminobutyrate and L-beta-aminoisobutyrate to succinate semialdehyde and methylmalonate semialdehyde, respectively. Can also convert delta-aminovalerate and beta-alanine. The chain is 4-aminobutyrate aminotransferase, mitochondrial from Homo sapiens (Human).